We begin with the raw amino-acid sequence, 305 residues long: NAD kinase 2 (305 aa).

Residue aspartate 78 is the Proton acceptor of the active site. Residues aspartate 78–glycine 79, asparagine 152–glutamate 153, aspartate 182, threonine 193–serine 198, and asparagine 251 each bind NAD(+).

Belongs to the NAD kinase family. The cofactor is a divalent metal cation.

The protein localises to the cytoplasm. It catalyses the reaction NAD(+) + ATP = ADP + NADP(+) + H(+). Its function is as follows. Involved in the regulation of the intracellular balance of NAD and NADP, and is a key enzyme in the biosynthesis of NADP. Catalyzes specifically the phosphorylation on 2'-hydroxyl of the adenosine moiety of NAD to yield NADP. This chain is NAD kinase 2, found in Trichormus variabilis (strain ATCC 29413 / PCC 7937) (Anabaena variabilis).